A 383-amino-acid polypeptide reads, in one-letter code: 8-amino-7-oxononanoate synthase (383 aa).

R23 lines the substrate pocket. G110–F111 provides a ligand contact to pyridoxal 5'-phosphate. H135 provides a ligand contact to substrate. Residues S181, H209, and T235 each coordinate pyridoxal 5'-phosphate. K238 is modified (N6-(pyridoxal phosphate)lysine). T351 contributes to the substrate binding site.

This sequence belongs to the class-II pyridoxal-phosphate-dependent aminotransferase family. BioF subfamily. As to quaternary structure, homodimer. It depends on pyridoxal 5'-phosphate as a cofactor.

The catalysed reaction is 6-carboxyhexanoyl-[ACP] + L-alanine + H(+) = (8S)-8-amino-7-oxononanoate + holo-[ACP] + CO2. Its pathway is cofactor biosynthesis; biotin biosynthesis. Functionally, catalyzes the decarboxylative condensation of pimeloyl-[acyl-carrier protein] and L-alanine to produce 8-amino-7-oxononanoate (AON), [acyl-carrier protein], and carbon dioxide. This chain is 8-amino-7-oxononanoate synthase, found in Aliivibrio salmonicida (strain LFI1238) (Vibrio salmonicida (strain LFI1238)).